Consider the following 347-residue polypeptide: NADH-ubiquinone oxidoreductase chain 2 (347 aa).

Helical transmembrane passes span 3 to 23, 25 to 45, 67 to 87, 96 to 116, 122 to 142, 145 to 165, 178 to 198, 200 to 220, 239 to 259, 274 to 294, and 325 to 345; these read PIIF…VMIS, HWLL…PIMM, SMLL…WTVM, MLMT…FWVP, IPLS…MSVL, IFPS…ILIG, IMAY…PYNP, MTLL…TMFM, IMTV…PLSG, NSII…YFYM, and FLPT…MLSV.

The protein belongs to the complex I subunit 2 family. As to quaternary structure, core subunit of respiratory chain NADH dehydrogenase (Complex I) which is composed of 45 different subunits. Interacts with TMEM242.

Its subcellular location is the mitochondrion inner membrane. The enzyme catalyses a ubiquinone + NADH + 5 H(+)(in) = a ubiquinol + NAD(+) + 4 H(+)(out). Its function is as follows. Core subunit of the mitochondrial membrane respiratory chain NADH dehydrogenase (Complex I) which catalyzes electron transfer from NADH through the respiratory chain, using ubiquinone as an electron acceptor. Essential for the catalytic activity and assembly of complex I. The sequence is that of NADH-ubiquinone oxidoreductase chain 2 from Bos indicus (Zebu).